The primary structure comprises 219 residues: MYLFLMINYFVLANSFDFQGYSMNARNEKSKQKRSSSETDYVCISNDYCAFLQKNTQNLYTLPICKCPGDNECPLTWDPDDGRTLIQGDIHFKFCSSAPVGLKQCGSDDIAYTAMWNKNLKTNTSEFTGEVFCECPKEVTHFLMKTKNEEGIEGQAYKCPKLQTCTSEEICVHIYNYTNNFFEIKYCKCPDGQSCPDELNSAAETDVKKERIRYGMKCK.

An N-terminal signal peptide occupies residues 1 to 15; the sequence is MYLFLMINYFVLANS.

The protein belongs to the scoloptoxin-11 family. In terms of processing, contains 8 disulfide bonds. As to expression, expressed by the venom gland.

Its subcellular location is the secreted. This is U-scoloptoxin(11)-Sm7a from Scolopendra morsitans (Tanzanian blue ringleg centipede).